The sequence spans 266 residues: Undecaprenyl-diphosphatase (266 aa).

The next 8 membrane-spanning stretches (helical) occupy residues 1-21, 39-59, 87-107, 114-134, 149-169, 183-203, 218-238, and 246-266; these read MDTF…FLPI, QGLS…VIYF, WWII…KDFI, AEVI…ADKM, ALLI…RSGA, AAAR…AILV, ALIL…HYFL, and MTPF…FIFF.

The protein belongs to the UppP family.

The protein resides in the cell inner membrane. It catalyses the reaction di-trans,octa-cis-undecaprenyl diphosphate + H2O = di-trans,octa-cis-undecaprenyl phosphate + phosphate + H(+). In terms of biological role, catalyzes the dephosphorylation of undecaprenyl diphosphate (UPP). Confers resistance to bacitracin. This Shewanella baltica (strain OS223) protein is Undecaprenyl-diphosphatase.